A 108-amino-acid chain; its full sequence is uncharacterized protein (108 aa).

The signal sequence occupies residues 1–21 (MFRSLFLAAALMAFTPLAANA).

This sequence to E.coli YaaX.

This is an uncharacterized protein from Escherichia coli O157:H7.